The chain runs to 352 residues: Quinolinate synthase (352 aa).

The iminosuccinate site is built by H48 and S69. C114 contributes to the [4Fe-4S] cluster binding site. Iminosuccinate is bound by residues 140–142 (YAN) and S157. C201 lines the [4Fe-4S] cluster pocket. Residues 227 to 229 (HPE) and T244 contribute to the iminosuccinate site. [4Fe-4S] cluster is bound at residue C298.

Belongs to the quinolinate synthase family. Type 1 subfamily. The cofactor is [4Fe-4S] cluster.

Its subcellular location is the cytoplasm. The enzyme catalyses iminosuccinate + dihydroxyacetone phosphate = quinolinate + phosphate + 2 H2O + H(+). The protein operates within cofactor biosynthesis; NAD(+) biosynthesis; quinolinate from iminoaspartate: step 1/1. Its function is as follows. Catalyzes the condensation of iminoaspartate with dihydroxyacetone phosphate to form quinolinate. The protein is Quinolinate synthase of Pseudomonas syringae pv. syringae (strain B728a).